Reading from the N-terminus, the 326-residue chain is Homocysteine S-methyltransferase 1 (326 aa).

Residues 9–323 (LLEDLIEKCG…STIKAISRDL (315 aa)) form the Hcy-binding domain. Residues Cys241, Cys308, and Cys309 each coordinate Zn(2+).

The cofactor is Zn(2+). In terms of tissue distribution, expressed in roots, young leaves, florets and flowers. Not detected in old leaves.

The catalysed reaction is S-methyl-L-methionine + L-homocysteine = 2 L-methionine + H(+). Inhibited by L-methionine. Its function is as follows. Catalyzes methyl transfer from S-methylmethionine to homocysteine. The highest preference is for DL-homocysteine &gt;&gt; DL-cysteine. Has no selenocysteine methyltransferase activity. The protein is Homocysteine S-methyltransferase 1 (HMT1) of Brassica oleracea var. italica (Broccoli).